The primary structure comprises 395 residues: Allantoicase (395 aa).

This sequence belongs to the allantoicase family.

The catalysed reaction is allantoate + H2O = (S)-ureidoglycolate + urea. The protein operates within nitrogen metabolism; (S)-allantoin degradation; (S)-ureidoglycolate from allantoate (aminidohydrolase route): step 1/1. Functionally, utilization of purines as secondary nitrogen sources, when primary sources are limiting. In Danio rerio (Zebrafish), this protein is Allantoicase (allc).